A 176-amino-acid polypeptide reads, in one-letter code: MQRSADVSIGPITGLNYTDLYDSLPSSVSDNITLLDLKEPERVTEATKKLILKGCVETAYHHPLETDPLFASVHKHLPDFCHSFLEHLLGGEQDENSLIDIGEFFKLLQPSLGDWITKYYLKHPNKMSGIQIKTLLNQIINMAKAESSDTETYEKVWKKMPSYFSIVLTPLLHKVV.

The protein belongs to the tenuiviruses NCP family.

It localises to the host cytoplasm. Functionally, induces the formation of large intracellular inclusion body, organized in amorphous and crystalline arrays. Presumably the main cause of the stripe disease observed in host. This is Major non-capsid protein from Rottboellia (Sorghum).